The following is a 606-amino-acid chain: Phosphomethylpyrimidine synthase (606 aa).

Residues 1-13 are compositionally biased toward polar residues; sequence MTTADARTPASKQ. Disordered stretches follow at residues 1-49 and 105-147; these read MTTA…SRPD and AGRP…DGRP. Low complexity predominate over residues 14-31; it reads NDGTPDGTTPDAGTPNDG. The segment covering 105–117 has biased composition (basic and acidic residues); the sequence is AGRPVRPEDDGLK. Substrate-binding positions include asparagine 213, methionine 242, tyrosine 271, histidine 307, 327–329, 368–371, and glutamate 407; these read SRG and DGLR. Residue histidine 411 coordinates Zn(2+). Tyrosine 434 serves as a coordination point for substrate. Histidine 475 is a Zn(2+) binding site. The [4Fe-4S] cluster site is built by cysteine 555, cysteine 558, and cysteine 563.

It belongs to the ThiC family. Requires [4Fe-4S] cluster as cofactor.

It carries out the reaction 5-amino-1-(5-phospho-beta-D-ribosyl)imidazole + S-adenosyl-L-methionine = 4-amino-2-methyl-5-(phosphooxymethyl)pyrimidine + CO + 5'-deoxyadenosine + formate + L-methionine + 3 H(+). The protein operates within cofactor biosynthesis; thiamine diphosphate biosynthesis. Catalyzes the synthesis of the hydroxymethylpyrimidine phosphate (HMP-P) moiety of thiamine from aminoimidazole ribotide (AIR) in a radical S-adenosyl-L-methionine (SAM)-dependent reaction. In Streptomyces griseus subsp. griseus (strain JCM 4626 / CBS 651.72 / NBRC 13350 / KCC S-0626 / ISP 5235), this protein is Phosphomethylpyrimidine synthase.